Reading from the N-terminus, the 130-residue chain is MARVTYYGTGRRKNAIARVRLVPGEGNITINKRNIEEYFNYETLRRDVRLPLELTETLSQFDVLATVNGGGYTGQAGALRHGIARALLKADDELRPALKKAGYLTRDSRMKERKKYGLKGARRAPQFSKR.

The segment at 109-130 (RMKERKKYGLKGARRAPQFSKR) is disordered. Residues 111–130 (KERKKYGLKGARRAPQFSKR) are compositionally biased toward basic residues.

It belongs to the universal ribosomal protein uS9 family.

The chain is Small ribosomal subunit protein uS9 from Alkaliphilus metalliredigens (strain QYMF).